We begin with the raw amino-acid sequence, 273 residues long: Odontogenic ameloblast-associated protein (273 aa).

The N-terminal stretch at 1–15 (MKIIILLGLIGASSS) is a signal peptide. The interval 100 to 124 (QGGQAGQPDLSQQQTPPQTQQSASP) is disordered. Positions 110–121 (SQQQTPPQTQQS) are enriched in low complexity. 2 O-linked (GalNAc...) threonine glycosylation sites follow: Thr114 and Thr118. The interaction with ARHGEF5 stretch occupies residues 125 to 127 (MSY). O-linked (GalNAc...) threonine glycans are attached at residues Thr159, Thr240, Thr241, Thr247, Thr252, Thr258, and Thr267. Polar residues predominate over residues 240 to 252 (TTSPKPSTDNFFT). Positions 240–273 (TTSPKPSTDNFFTSGIDPTIAPEQKVKTDSLREP) are disordered. Over residues 263 to 273 (QKVKTDSLREP) the composition is skewed to basic and acidic residues.

Belongs to the ODAM family. Interacts (via C-terminus) with ARHGEF5. In terms of processing, O-glycosylated. As to expression, highly expressed in tooth-associated epithelia. Predominantly expressed in mandible.

The protein localises to the secreted. Its subcellular location is the cytoplasm. The protein resides in the nucleus. Its function is as follows. Tooth-associated epithelia protein that probably plays a role in odontogenesis, the complex process that results in the initiation and generation of the tooth. May be incorporated in the enamel matrix at the end of mineralization process. Involved in the induction of RHOA activity via interaction with ARHGEF and expression of downstream factors such as ROCK. Plays a role in attachment of the junctional epithelium to the tooth surface. The sequence is that of Odontogenic ameloblast-associated protein (Odam) from Mus musculus (Mouse).